Reading from the N-terminus, the 440-residue chain is Endoglucanase B (440 aa).

The first 33 residues, 1–33 (MNKRLSRGKISLLASVFVTTTFMGGVNVLASTA), serve as a signal peptide directing secretion. The active-site Proton donor is Glu179. Glu305 serves as the catalytic Nucleophile. The Dockerin domain occupies 381-440 (TSYSLGDVNKDGKVNAIDYAVLKSILLGTNTNVDLSVSDMNKDGKVNALDLAVLKKMLLS).

It belongs to the glycosyl hydrolase 5 (cellulase A) family.

The enzyme catalyses Endohydrolysis of (1-&gt;4)-beta-D-glucosidic linkages in cellulose, lichenin and cereal beta-D-glucans.. The catalysed reaction is Endohydrolysis of (1-&gt;4)-beta-D-xylosidic linkages in xylans.. Its function is as follows. Has endoglucanase activity on carboxymethyl-cellulose (CMC), xylan and lichenan, but not Avicel. In Clostridium cellulovorans (strain ATCC 35296 / DSM 3052 / OCM 3 / 743B), this protein is Endoglucanase B (engB).